A 454-amino-acid chain; its full sequence is Diaminobutyrate--2-oxoglutarate aminotransferase (454 aa).

Lys287 carries the N6-(pyridoxal phosphate)lysine modification.

Belongs to the class-III pyridoxal-phosphate-dependent aminotransferase family. Requires pyridoxal 5'-phosphate as cofactor.

It carries out the reaction L-2,4-diaminobutanoate + 2-oxoglutarate = L-aspartate 4-semialdehyde + L-glutamate. It functions in the pathway amine and polyamine biosynthesis; 1,3-diaminopropane biosynthesis; 1,3-diaminopropane from L-aspartate 4-semialdehyde: step 1/2. This is Diaminobutyrate--2-oxoglutarate aminotransferase (dat) from Haemophilus influenzae (strain ATCC 51907 / DSM 11121 / KW20 / Rd).